The sequence spans 415 residues: Homoserine O-acetyltransferase (415 aa).

An AB hydrolase-1 domain is found at 47 to 369 (NAVLVCHGLT…HGHDAFLVEP (323 aa)). Serine 155 serves as the catalytic Nucleophile. Arginine 226 serves as a coordination point for substrate. Residues aspartate 329 and histidine 362 contribute to the active site. Aspartate 363 contacts substrate. The interval 387–415 (RAVTDTATDGGEPDEEKDFAPVHSSLFSR) is disordered.

It belongs to the AB hydrolase superfamily. MetX family. In terms of assembly, homodimer.

Its subcellular location is the cytoplasm. The enzyme catalyses L-homoserine + acetyl-CoA = O-acetyl-L-homoserine + CoA. Its pathway is amino-acid biosynthesis; L-methionine biosynthesis via de novo pathway; O-acetyl-L-homoserine from L-homoserine: step 1/1. Its function is as follows. Transfers an acetyl group from acetyl-CoA to L-homoserine, forming acetyl-L-homoserine. This is Homoserine O-acetyltransferase from Haloferax gibbonsii (strain ATCC 33959 / DSM 4427 / JCM 8863 / NBRC 102184 / NCIMB 2188 / Ma 2.38).